A 586-amino-acid chain; its full sequence is Phosphomethylpyrimidine synthase (586 aa).

The disordered stretch occupies residues 1–33; that stretch reads MKQSVSAEQIELKSSLPGSKKVYVDGPREGMKV. Residues 22-33 show a composition bias toward basic and acidic residues; it reads VYVDGPREGMKV. Substrate is bound by residues Asn193, Met222, Tyr251, His287, 307–309, 348–351, and Glu387; these read SRG and DGLR. His391 provides a ligand contact to Zn(2+). Tyr414 provides a ligand contact to substrate. His455 is a Zn(2+) binding site. Cys535, Cys538, and Cys543 together coordinate [4Fe-4S] cluster.

It belongs to the ThiC family. [4Fe-4S] cluster serves as cofactor.

It carries out the reaction 5-amino-1-(5-phospho-beta-D-ribosyl)imidazole + S-adenosyl-L-methionine = 4-amino-2-methyl-5-(phosphooxymethyl)pyrimidine + CO + 5'-deoxyadenosine + formate + L-methionine + 3 H(+). Its pathway is cofactor biosynthesis; thiamine diphosphate biosynthesis. Functionally, catalyzes the synthesis of the hydroxymethylpyrimidine phosphate (HMP-P) moiety of thiamine from aminoimidazole ribotide (AIR) in a radical S-adenosyl-L-methionine (SAM)-dependent reaction. This Bacillus cereus (strain G9842) protein is Phosphomethylpyrimidine synthase.